Reading from the N-terminus, the 131-residue chain is Profilin-7 (131 aa).

A disulfide bridge connects residues C13 and C115. The short motif at 81–97 is the Involved in PIP2 interaction element; it reads AVIRGKKGAGGITIKKT. T111 carries the phosphothreonine modification.

Belongs to the profilin family. As to quaternary structure, occurs in many kinds of cells as a complex with monomeric actin in a 1:1 ratio. In terms of processing, phosphorylated by MAP kinases.

It localises to the cytoplasm. It is found in the cytoskeleton. Binds to actin and affects the structure of the cytoskeleton. At high concentrations, profilin prevents the polymerization of actin, whereas it enhances it at low concentrations. The chain is Profilin-7 from Olea europaea (Common olive).